The chain runs to 381 residues: tRNA (guanine(26)-N(2))-dimethyltransferase (381 aa).

A Trm1 methyltransferase domain is found at 6–378 (FEVHEGKAKV…APYEVFVEVM (373 aa)). S-adenosyl-L-methionine-binding residues include Arg-38, Arg-63, Asp-80, Asp-122, and Ala-123.

The protein belongs to the class I-like SAM-binding methyltransferase superfamily. Trm1 family. As to quaternary structure, monomer.

The enzyme catalyses guanosine(26) in tRNA + 2 S-adenosyl-L-methionine = N(2)-dimethylguanosine(26) in tRNA + 2 S-adenosyl-L-homocysteine + 2 H(+). In terms of biological role, dimethylates a single guanine residue at position 26 of a number of tRNAs using S-adenosyl-L-methionine as donor of the methyl groups. This is tRNA (guanine(26)-N(2))-dimethyltransferase from Pyrococcus furiosus (strain ATCC 43587 / DSM 3638 / JCM 8422 / Vc1).